Reading from the N-terminus, the 623-residue chain is Scarecrow-like protein 22 (623 aa).

Disordered regions lie at residues 62 to 90 (RSPS…AAAA) and 179 to 203 (PNPG…QPGS). Residues 63 to 80 (SPSPFVSSSTTTLSSSHG) are compositionally biased toward low complexity. The GRAS domain occupies 235 to 622 (NDQDQSAVII…KELVTVSAWK (388 aa)). The interval 242–311 (VIIDQLFSAA…ALHSLLQDSS (70 aa)) is leucine repeat I (LRI). The segment at 330-398 (YRAFSETSPF…SSAPSLKITA (69 aa)) is VHIID. A VHIID motif is present at residues 361–365 (IHIVD). A leucine repeat II (LRII) region spans residues 413-448 (FTEENLRSFAGETGVSFEIELLNMEILLNPTYWPLS). Positions 458–545 (IAVNLPISSM…RFCVQPSIQK (88 aa)) are PFYRE. The segment at 548–622 (TNRYRWMERS…KELVTVSAWK (75 aa)) is SAW.

It belongs to the GRAS family. As to expression, expressed in seedlings, roots, leaves and flowers.

The protein resides in the nucleus. Its function is as follows. Probable transcription factor involved in plant development. This is Scarecrow-like protein 22 (SCL22) from Arabidopsis thaliana (Mouse-ear cress).